We begin with the raw amino-acid sequence, 995 residues long: Aconitate hydratase 2, mitochondrial (995 aa).

Residues 1-83 constitute a mitochondrion transit peptide; sequence MYRRATSGVR…PASLRAQARN (83 aa). Residues Q187 and 306-308 each bind substrate; that span reads DSH. C538, C604, and C607 together coordinate [4Fe-4S] cluster. Substrate-binding positions include R637, R642, R800, and 881 to 882; that span reads SR.

This sequence belongs to the aconitase/IPM isomerase family. As to quaternary structure, monomer. [4Fe-4S] cluster serves as cofactor. Mostly expressed in roots, leaves and flowers, also present in stems, and, at low levels, in seeds.

The protein resides in the mitochondrion. The enzyme catalyses citrate = D-threo-isocitrate. It functions in the pathway carbohydrate metabolism; tricarboxylic acid cycle; isocitrate from oxaloacetate: step 2/2. Its function is as follows. Catalyzes the isomerization of citrate to isocitrate via cis-aconitate. Contributes to oxidative stress tolerance. Involved in acetate assimilation. This chain is Aconitate hydratase 2, mitochondrial, found in Arabidopsis thaliana (Mouse-ear cress).